Here is a 561-residue protein sequence, read N- to C-terminus: Tetracenomycin A2 monooxygenase-dioxygenase (561 aa).

4 residues coordinate FAD: leucine 15, glutamate 35, glutamine 128, and methionine 152. Tyrosine 231 (proton acceptor) is an active-site residue. Aspartate 322 provides a ligand contact to FAD.

It belongs to the PheA/TfdB FAD monooxygenase family. In terms of assembly, monomer. May form oligomers up to homohexamers. It depends on FAD as a cofactor.

It catalyses the reaction tetracenomycin A2 + 2 NADPH + 2 O2 + 2 H(+) = tetracenomycin C + 2 NADP(+) + H2O. Its pathway is antibiotic biosynthesis; tetracenomycin C biosynthesis. Its function is as follows. Involved in the biosynthesis of tetracenomycin C (TCM C). Catalyzes the triple hydroxylation of tetracenomycin A2 (TCM A2) at positions C-4, C-4a and C-12a to give tetracenomycin C (TCM C). Can use either NADH or NADPH as electron donors, but prefers NADPH under physiological conditions. This is Tetracenomycin A2 monooxygenase-dioxygenase from Streptomyces glaucescens.